Here is a 76-residue protein sequence, read N- to C-terminus: uncharacterized protein (76 aa).

The protein belongs to the IIV-6 342R family.

This is an uncharacterized protein from Invertebrate iridescent virus 3 (IIV-3).